The chain runs to 244 residues: 1-(5-phosphoribosyl)-5-[(5-phosphoribosylamino)methylideneamino] imidazole-4-carboxamide isomerase (244 aa).

The active-site Proton acceptor is D11. The active-site Proton donor is the D132.

This sequence belongs to the HisA/HisF family.

The protein resides in the cytoplasm. The enzyme catalyses 1-(5-phospho-beta-D-ribosyl)-5-[(5-phospho-beta-D-ribosylamino)methylideneamino]imidazole-4-carboxamide = 5-[(5-phospho-1-deoxy-D-ribulos-1-ylimino)methylamino]-1-(5-phospho-beta-D-ribosyl)imidazole-4-carboxamide. Its pathway is amino-acid biosynthesis; L-histidine biosynthesis; L-histidine from 5-phospho-alpha-D-ribose 1-diphosphate: step 4/9. The polypeptide is 1-(5-phosphoribosyl)-5-[(5-phosphoribosylamino)methylideneamino] imidazole-4-carboxamide isomerase (Sphingopyxis alaskensis (strain DSM 13593 / LMG 18877 / RB2256) (Sphingomonas alaskensis)).